A 1090-amino-acid chain; its full sequence is UPF0507 protein SCY_4172 (1090 aa).

Residues 289-436 enclose the VPS9 domain; that stretch reads FSVNQLLTDF…FEDFNKNTGN (148 aa).

Belongs to the UPF0507 family.

In Saccharomyces cerevisiae (strain YJM789) (Baker's yeast), this protein is UPF0507 protein SCY_4172.